The chain runs to 366 residues: Phospho-N-acetylmuramoyl-pentapeptide-transferase (366 aa).

The next 10 helical transmembrane spans lie at 27–47 (AALF…INSL), 71–91 (TPTM…LLWA), 93–113 (LSNV…AIGF), 138–158 (FVIA…SGIA), 174–194 (FMIN…VGAG), 205–225 (GLAI…AYLA), 245–265 (LAVV…FNAP), 268–288 (AIFM…TVAV), 294–314 (IVMA…IIQV), and 343–363 (QVVI…LSTL).

This sequence belongs to the glycosyltransferase 4 family. MraY subfamily. It depends on Mg(2+) as a cofactor.

It localises to the cell inner membrane. The catalysed reaction is UDP-N-acetyl-alpha-D-muramoyl-L-alanyl-gamma-D-glutamyl-meso-2,6-diaminopimeloyl-D-alanyl-D-alanine + di-trans,octa-cis-undecaprenyl phosphate = di-trans,octa-cis-undecaprenyl diphospho-N-acetyl-alpha-D-muramoyl-L-alanyl-D-glutamyl-meso-2,6-diaminopimeloyl-D-alanyl-D-alanine + UMP. It functions in the pathway cell wall biogenesis; peptidoglycan biosynthesis. Its function is as follows. Catalyzes the initial step of the lipid cycle reactions in the biosynthesis of the cell wall peptidoglycan: transfers peptidoglycan precursor phospho-MurNAc-pentapeptide from UDP-MurNAc-pentapeptide onto the lipid carrier undecaprenyl phosphate, yielding undecaprenyl-pyrophosphoryl-MurNAc-pentapeptide, known as lipid I. This is Phospho-N-acetylmuramoyl-pentapeptide-transferase from Rhizobium johnstonii (strain DSM 114642 / LMG 32736 / 3841) (Rhizobium leguminosarum bv. viciae).